The following is a 205-amino-acid chain: Ribosomal RNA small subunit methyltransferase G (205 aa).

Residues glycine 76, leucine 81, isoleucine 127–glutamate 128, and arginine 140 contribute to the S-adenosyl-L-methionine site.

This sequence belongs to the methyltransferase superfamily. RNA methyltransferase RsmG family.

It localises to the cytoplasm. It catalyses the reaction guanosine(527) in 16S rRNA + S-adenosyl-L-methionine = N(7)-methylguanosine(527) in 16S rRNA + S-adenosyl-L-homocysteine. In terms of biological role, specifically methylates the N7 position of guanine in position 527 of 16S rRNA. This chain is Ribosomal RNA small subunit methyltransferase G, found in Francisella tularensis subsp. tularensis (strain WY96-3418).